The chain runs to 205 residues: Putative lipoprotein LppC (205 aa).

Residues M1–G27 form the signal peptide. C28 is lipidated: N-palmitoyl cysteine. Residue C28 is the site of S-diacylglycerol cysteine attachment. Positions G126–G145 are disordered.

Belongs to the UPF0098 family.

The protein resides in the cell membrane. The sequence is that of Putative lipoprotein LppC (lppC) from Mycobacterium tuberculosis (strain CDC 1551 / Oshkosh).